We begin with the raw amino-acid sequence, 265 residues long: Glutamate racemase (265 aa).

Substrate-binding positions include 12–13 (DS) and 44–45 (YG). C75 acts as the Proton donor/acceptor in catalysis. 76-77 (NT) is a substrate binding site. Residue C186 is the Proton donor/acceptor of the active site. 187 to 188 (TH) is a binding site for substrate.

This sequence belongs to the aspartate/glutamate racemases family.

It catalyses the reaction L-glutamate = D-glutamate. Its pathway is cell wall biogenesis; peptidoglycan biosynthesis. In terms of biological role, provides the (R)-glutamate required for cell wall biosynthesis. The sequence is that of Glutamate racemase from Pseudomonas paraeruginosa (strain DSM 24068 / PA7) (Pseudomonas aeruginosa (strain PA7)).